The following is a 420-amino-acid chain: D-tagatose-1,6-bisphosphate aldolase subunit GatZ (420 aa).

It belongs to the GatZ/KbaZ family. GatZ subfamily. As to quaternary structure, forms a complex with GatY.

Its pathway is carbohydrate metabolism; D-tagatose 6-phosphate degradation; D-glyceraldehyde 3-phosphate and glycerone phosphate from D-tagatose 6-phosphate: step 2/2. Its function is as follows. Component of the tagatose-1,6-bisphosphate aldolase GatYZ that is required for full activity and stability of the Y subunit. Could have a chaperone-like function for the proper and stable folding of GatY. When expressed alone, GatZ does not show any aldolase activity. Is involved in the catabolism of galactitol. This is D-tagatose-1,6-bisphosphate aldolase subunit GatZ from Escherichia coli O9:H4 (strain HS).